A 538-amino-acid chain; its full sequence is UPF0761 membrane protein PsycPRwf_0630 (538 aa).

6 helical membrane passes run 43–63 (LLSIVPILTVLLMILSSVPAL), 100–120 (LTAIGALALFVTTIMTLTTIE), 143–163 (WTIITLGPLVLGTAFLVSSAV), 183–203 (WVQVVSFAVTIAGFIGMYWFI), 215–235 (IAGVFVAVTFELLKYSFGIIM), and 247–267 (AFAALPIFLLWIYLSWNLILL). Residues 427–538 (SVFSAQDADA…IITEDDNPNK (112 aa)) are disordered. Residues 482–493 (PPDADIKAAAAK) are compositionally biased toward low complexity. The span at 503–514 (KHTETAKQEHKK) shows a compositional bias: basic and acidic residues.

This sequence belongs to the UPF0761 family.

It localises to the cell inner membrane. This chain is UPF0761 membrane protein PsycPRwf_0630, found in Psychrobacter sp. (strain PRwf-1).